Here is a 623-residue protein sequence, read N- to C-terminus: Adenine deaminase 2 (623 aa).

It belongs to the metallo-dependent hydrolases superfamily. Adenine deaminase family. Mn(2+) serves as cofactor.

It catalyses the reaction adenine + H2O + H(+) = hypoxanthine + NH4(+). In Jannaschia sp. (strain CCS1), this protein is Adenine deaminase 2.